The following is a 125-amino-acid chain: MAGGVGARVVVGRHIYGNLYGCDPQILRDESALITIIKEATKIANAMLLSVGSYRFGPNGGLTVFAIVAESHISIHTWPEYGFATVDVYTCGDHTDPKAAFDYIVSKLKPQKVEAFFGDRSMYKE.

The active-site Schiff-base intermediate with substrate; via pyruvic acid is the serine 71. The residue at position 71 (serine 71) is a Pyruvic acid (Ser); by autocatalysis. The active-site Proton acceptor; for processing activity is the histidine 76. Cysteine 91 acts as the Proton donor; for catalytic activity in catalysis.

This sequence belongs to the prokaryotic AdoMetDC family. Type 1 subfamily. As to quaternary structure, heterotetramer of two alpha and two beta chains arranged as a dimer of alpha/beta heterodimers. Pyruvate serves as cofactor. Post-translationally, is synthesized initially as an inactive proenzyme. Formation of the active enzyme involves a self-maturation process in which the active site pyruvoyl group is generated from an internal serine residue via an autocatalytic post-translational modification. Two non-identical subunits are generated from the proenzyme in this reaction, and the pyruvate is formed at the N-terminus of the alpha chain, which is derived from the carboxyl end of the proenzyme. The post-translation cleavage follows an unusual pathway, termed non-hydrolytic serinolysis, in which the side chain hydroxyl group of the serine supplies its oxygen atom to form the C-terminus of the beta chain, while the remainder of the serine residue undergoes an oxidative deamination to produce ammonia and the pyruvoyl group blocking the N-terminus of the alpha chain.

It catalyses the reaction S-adenosyl-L-methionine + H(+) = S-adenosyl 3-(methylsulfanyl)propylamine + CO2. It functions in the pathway amine and polyamine biosynthesis; S-adenosylmethioninamine biosynthesis; S-adenosylmethioninamine from S-adenosyl-L-methionine: step 1/1. Catalyzes the decarboxylation of S-adenosylmethionine to S-adenosylmethioninamine (dcAdoMet), the propylamine donor required for the synthesis of the polyamines spermine and spermidine from the diamine putrescine. This is S-adenosylmethionine decarboxylase proenzyme from Pyrobaculum islandicum (strain DSM 4184 / JCM 9189 / GEO3).